Consider the following 59-residue polypeptide: Chromatin protein Cren7 (59 aa).

Belongs to the Cren7 family. Monomer. In terms of processing, methylated at multiple sites, to varying extents.

Its subcellular location is the chromosome. The protein resides in the cytoplasm. In terms of biological role, a chromatin protein, binds double-stranded DNA without sequence specificity. Constrains negative DNA supercoils. The polypeptide is Chromatin protein Cren7 (Pyrobaculum aerophilum (strain ATCC 51768 / DSM 7523 / JCM 9630 / CIP 104966 / NBRC 100827 / IM2)).